The sequence spans 376 residues: Delta(12) fatty acid desaturase fat-2 (376 aa).

A run of 4 helical transmembrane segments spans residues 45–65 (ISYLIKDYVLLAGLYFAVPYI), 69–89 (LGWIGLLGWYWAMGIVGSALF), 203–223 (VKCAVSGVACAICAYIAFVLC), and 228–248 (YTFVKYYYIPLLFQGLILVII).

The protein belongs to the fatty acid desaturase type 1 family.

Its subcellular location is the membrane. It catalyses the reaction (9Z)-octadecenoyl-CoA + 2 Fe(II)-[cytochrome b5] + O2 + 2 H(+) = (9Z,12Z)-octadecadienoyl-CoA + 2 Fe(III)-[cytochrome b5] + 2 H2O. The enzyme catalyses (9Z)-hexadecenoyl-CoA + 2 Fe(II)-[cytochrome b5] + O2 + 2 H(+) = (9Z,12Z)-hexadecadienoyl-CoA + 2 Fe(III)-[cytochrome b5] + 2 H2O. It carries out the reaction (9Z,12Z)-octadecadienoyl-CoA + 2 Fe(II)-[cytochrome b5] + O2 + 2 H(+) = (9Z,12Z,15Z)-octadecatrienoyl-CoA + 2 Fe(III)-[cytochrome b5] + 2 H2O. The catalysed reaction is (9Z)-heptadecenoyl-CoA + 2 Fe(II)-[cytochrome b5] + O2 + 2 H(+) = (9Z,12Z)-heptadecadienoyl-CoA + 2 Fe(III)-[cytochrome b5] + 2 H2O. It catalyses the reaction (9Z)-pentadecenoyl-CoA + 2 Fe(II)-[cytochrome b5] + O2 + 2 H(+) = (9Z,12Z)-pentadecadienoyl-CoA + 2 Fe(III)-[cytochrome b5] + 2 H2O. The enzyme catalyses (6Z,9Z,12Z)-octadecatrienoyl-CoA + 2 Fe(II)-[cytochrome b5] + O2 + 2 H(+) = (6Z,9Z,12Z,15Z)-octadecatetraenoyl-CoA + 2 Fe(III)-[cytochrome b5] + 2 H2O. It carries out the reaction (9Z)-tetradecenoyl-CoA + 2 Fe(II)-[cytochrome b5] + O2 + 2 H(+) = (9Z,12Z)-tetradecadienoyl-CoA + 2 Fe(III)-[cytochrome b5] + 2 H2O. The protein operates within lipid metabolism; polyunsaturated fatty acid biosynthesis. Can function as a Delta(12)/Delta(15) bifunctional desaturase and behaves as a nu +3' desaturase. Introduces a double bond in the fatty acid chain three carbons away from an existing double bond to biosynthesize polyunsaturated fatty acids (PUFAs) endogenously (PUFAs are essential for membrane structure and many cellular and physiological processes). Acts on a number of substrates like oleoyl-CoA ((9Z)-octadecenoyl-CoA, 18:1n-9), palmitoleoyl-CoA ((9Z)-hexadecenoyl-CoA, 16:1n-7), and gamma-linolenoyl-CoA ((6Z,9Z,12Z)-octadecatrienoyl-CoA, 18:3n-6), to generate linoleoyl-CoA ((9Z,12Z)-octadecadienoyl-CoA, 18:2n-6), (9Z,12Z)-hexadecadienoyl-CoA (16:2n-4) and (6Z,9Z,12Z,15Z)-octadecatetraenoyl-CoA (18:4n-3) respectively. Unlike plants, Caenorhabditis elegans desaturases seem to use fatty acyl-CoAs as substrates. This chain is Delta(12) fatty acid desaturase fat-2 (fat-2), found in Caenorhabditis elegans.